A 191-amino-acid polypeptide reads, in one-letter code: Cdc42 homolog (191 aa).

10–17 (GDGAVGKT) is a binding site for GTP. Residues 32–40 (YVPTVFDNY) carry the Effector region motif. GTP contacts are provided by residues 57 to 61 (DTAGQ) and 115 to 118 (TQID). Position 188 is a cysteine methyl ester (Cys-188). The S-geranylgeranyl cysteine moiety is linked to residue Cys-188. The propeptide at 189–191 (KFL) is removed in mature form.

The protein belongs to the small GTPase superfamily. Rho family. CDC42 subfamily.

The protein resides in the cell junction. Its subcellular location is the adherens junction. The protein localises to the cell membrane. Functionally, regulates mbt kinase activity and is also required to recruit mbt to adherens junctions. Together with mbt, regulates photoreceptor cell morphogenesis. The chain is Cdc42 homolog from Aedes aegypti (Yellowfever mosquito).